Here is a 338-residue protein sequence, read N- to C-terminus: Aspartate carbamoyltransferase catalytic subunit (338 aa).

Carbamoyl phosphate contacts are provided by Arg-59 and Thr-60. Lys-87 is an L-aspartate binding site. Carbamoyl phosphate is bound by residues Arg-109, His-142, and Gln-145. L-aspartate contacts are provided by Arg-182 and Arg-253. Residues Gly-294 and Pro-295 each coordinate carbamoyl phosphate.

The protein belongs to the aspartate/ornithine carbamoyltransferase superfamily. ATCase family. Heterododecamer (2C3:3R2) of six catalytic PyrB chains organized as two trimers (C3), and six regulatory PyrI chains organized as three dimers (R2).

The catalysed reaction is carbamoyl phosphate + L-aspartate = N-carbamoyl-L-aspartate + phosphate + H(+). It functions in the pathway pyrimidine metabolism; UMP biosynthesis via de novo pathway; (S)-dihydroorotate from bicarbonate: step 2/3. In terms of biological role, catalyzes the condensation of carbamoyl phosphate and aspartate to form carbamoyl aspartate and inorganic phosphate, the committed step in the de novo pyrimidine nucleotide biosynthesis pathway. This Prochlorococcus marinus (strain SARG / CCMP1375 / SS120) protein is Aspartate carbamoyltransferase catalytic subunit.